The sequence spans 415 residues: MKGSYKSRWVIVIVVVIAAIAAFWFWQGRNDSQSAAPGATKQAQQSPAGGRRGMRSGPLAPVQAATAVEQAVPRYLTGLGTITAANTVTVRSRVDGQLMALHFQEGQQVKAGDLLAEIDPSQFKVALAQAQGQLAKDKATLTNARRDLARYQQLAKTNLVSRQELDAQQALVSETEGTIKADEASVASAQLQLDWSRITAPVDGRVGLKQVDVGNQISSGDTTGIVVITQTHPIDLLFTLPESDIATVVQAQKAGKPLVVEAWDRTNSKKLSEGTLLSLDNQIDATTGTIKVKARFNNQDDALFPNQFVNARMLVDTEQNAVVIPTAALQMGNEGHFVWVLNSENKVSKHLVTPGIQDSQKVVIRAGISAGDRVVTDGIDRLTEGAKVEVVEAQSATTPEEKATSREYAKKGARS.

An N-terminal signal peptide occupies residues 1 to 21 (MKGSYKSRWVIVIVVVIAAIA). Residues 31–47 (DSQSAAPGATKQAQQSP) are compositionally biased toward polar residues. Disordered regions lie at residues 31–60 (DSQSAAPGATKQAQQSPAGGRRGMRSGPLA) and 392–415 (EAQSATTPEEKATSREYAKKGARS). The segment covering 399–415 (PEEKATSREYAKKGARS) has biased composition (basic and acidic residues).

It belongs to the membrane fusion protein (MFP) (TC 8.A.1) family. In terms of assembly, part of a tripartite efflux system composed of MdtA, MdtB and MdtC.

The protein resides in the cell inner membrane. The MdtABC tripartite complex confers resistance against novobiocin and deoxycholate. The sequence is that of Multidrug resistance protein MdtA from Escherichia coli O157:H7.